Consider the following 470-residue polypeptide: Nuclear segregation protein BFR1 (470 aa).

2 coiled-coil regions span residues 17–178 (DKKL…NGLN) and 237–281 (NEFK…THAK). Residue Ser-260 is modified to Phosphoserine. Thr-336 bears the Phosphothreonine mark. Residues 346–368 (APSKSKKYKKKNQQKNTENEQPA) form a disordered region. Basic residues predominate over residues 349 to 358 (KSKKYKKKNQ). Ser-369 is subject to Phosphoserine. Residues 398 to 469 (NSDDVKITVE…EQEESEKDKE (72 aa)) are a coiled coil. Residues 447-470 (QQVKKELEEKRLKEQEESEKDKEN) are disordered.

Functionally, implicated in secretion, nuclear segregation and in maintenance of cell size. The sequence is that of Nuclear segregation protein BFR1 (BFR1) from Saccharomyces cerevisiae (strain ATCC 204508 / S288c) (Baker's yeast).